We begin with the raw amino-acid sequence, 210 residues long: MTTRVVLGSASSGRLKVLRQAGIEPLVVVSGVDEDAIVAALGAAAPPDQVVCALAAAKAASVVESLPTEVATDCVVIGCDSMLQLDGRLTGKPGTPAAARAQWQQMAGRSGELYTGHCLVRVRDGVAGRREVEAAATTVRFGTPPPADLAAYVDSGEPLGVAGAFTLDGLGGWFLDGVDGDPSNVIGLSLPLVRRMLDRLDLSVPALWTR.

Asp-80 acts as the Proton acceptor in catalysis.

The protein belongs to the Maf family. A divalent metal cation serves as cofactor.

It is found in the cytoplasm. It catalyses the reaction a ribonucleoside 5'-triphosphate + H2O = a ribonucleoside 5'-phosphate + diphosphate + H(+). It carries out the reaction a 2'-deoxyribonucleoside 5'-triphosphate + H2O = a 2'-deoxyribonucleoside 5'-phosphate + diphosphate + H(+). Nucleoside triphosphate pyrophosphatase. May have a dual role in cell division arrest and in preventing the incorporation of modified nucleotides into cellular nucleic acids. In Mycobacterium sp. (strain JLS), this protein is Nucleoside triphosphate pyrophosphatase.